Reading from the N-terminus, the 1296-residue chain is DNA-directed RNA polymerase subunit beta' (1296 aa).

Zn(2+) is bound by residues Cys-60, Cys-62, Cys-75, and Cys-78. Residues 185 to 202 (EEEGGKAAEKRKLRDSAD) show a composition bias toward basic and acidic residues. The segment at 185-204 (EEEGGKAAEKRKLRDSADRQ) is disordered. Mg(2+)-binding residues include Asp-535, Asp-537, and Asp-539. Zn(2+) contacts are provided by Cys-877, Cys-954, Cys-961, and Cys-964.

Belongs to the RNA polymerase beta' chain family. As to quaternary structure, the RNAP catalytic core consists of 2 alpha, 1 beta, 1 beta' and 1 omega subunit. When a sigma factor is associated with the core the holoenzyme is formed, which can initiate transcription. Mg(2+) serves as cofactor. Zn(2+) is required as a cofactor.

It carries out the reaction RNA(n) + a ribonucleoside 5'-triphosphate = RNA(n+1) + diphosphate. Its function is as follows. DNA-dependent RNA polymerase catalyzes the transcription of DNA into RNA using the four ribonucleoside triphosphates as substrates. This chain is DNA-directed RNA polymerase subunit beta', found in Kocuria rhizophila (strain ATCC 9341 / DSM 348 / NBRC 103217 / DC2201).